Consider the following 159-residue polypeptide: NADH-quinone oxidoreductase subunit I (159 aa).

2 4Fe-4S ferredoxin-type domains span residues 51–80 (RRYE…IEAE) and 90–119 (TRYD…EGPN). [4Fe-4S] cluster contacts are provided by Cys-60, Cys-63, Cys-66, Cys-70, Cys-99, Cys-102, Cys-105, and Cys-109.

It belongs to the complex I 23 kDa subunit family. As to quaternary structure, NDH-1 is composed of 14 different subunits. Subunits NuoA, H, J, K, L, M, N constitute the membrane sector of the complex. Requires [4Fe-4S] cluster as cofactor.

It localises to the cell inner membrane. The enzyme catalyses a quinone + NADH + 5 H(+)(in) = a quinol + NAD(+) + 4 H(+)(out). Its function is as follows. NDH-1 shuttles electrons from NADH, via FMN and iron-sulfur (Fe-S) centers, to quinones in the respiratory chain. The immediate electron acceptor for the enzyme in this species is believed to be ubiquinone. Couples the redox reaction to proton translocation (for every two electrons transferred, four hydrogen ions are translocated across the cytoplasmic membrane), and thus conserves the redox energy in a proton gradient. The protein is NADH-quinone oxidoreductase subunit I of Rickettsia canadensis (strain McKiel).